The sequence spans 500 residues: Lysine--tRNA ligase (500 aa).

Positions 410 and 417 each coordinate Mg(2+).

This sequence belongs to the class-II aminoacyl-tRNA synthetase family. In terms of assembly, homodimer. Mg(2+) is required as a cofactor.

The protein resides in the cytoplasm. The enzyme catalyses tRNA(Lys) + L-lysine + ATP = L-lysyl-tRNA(Lys) + AMP + diphosphate. In Shewanella sp. (strain ANA-3), this protein is Lysine--tRNA ligase.